The following is a 287-amino-acid chain: MLGSMALKLRKWIWASIPSLALILSSCSALVASVELKSLSELQNLADRNTELTKNKRTLITTLRESYGLNPKGTLNLLFEGWRYTLLSQRILERWQTEVGRFAKSFGNGSNQNSVQPNATLKGLKLSERSTTEIQLLAEQAITVSKQEVKEFTYKVESNKQFEATVKIKADLKIDPTKAMSHIENIFKDDETKKKDAQNSLTMSMGQNEALEATFTYSPATQGIFGRASFDRFTSNIKLNTKLRIQVSSTSDLMKKLLENSLTSSLKDQSFDNEGVNLFPYTLFALL.

A signal peptide spans 1-31 (MLGSMALKLRKWIWASIPSLALILSSCSALV).

The protein belongs to the MG439/MG440 family.

This is an uncharacterized protein from Mycoplasma pneumoniae (strain ATCC 29342 / M129 / Subtype 1) (Mycoplasmoides pneumoniae).